A 69-amino-acid polypeptide reads, in one-letter code: uncharacterized protein (69 aa).

It localises to the mitochondrion. This is an uncharacterized protein from Marchantia polymorpha (Common liverwort).